Reading from the N-terminus, the 582-residue chain is Myoneurin (582 aa).

The BTB domain occupies 24–89 (CDCTIVIGEF…IYTGTLNLDS (66 aa)). The disordered stretch occupies residues 169–197 (QGALAKKSSQTKKKKKAFNSPKTGQNKTV). 2 consecutive short sequence motifs (nuclear localization signal) follow at residues 174 to 190 (KKSS…NSPK) and 257 to 262 (KRKRGK). Polar residues predominate over residues 188–197 (SPKTGQNKTV). Ser289 is modified (phosphoserine). The segment at 302-324 (PMCNTRGKVFSEASSLRRHMRIH) adopts a C2H2-type 1; degenerate zinc-finger fold. 6 C2H2-type zinc fingers span residues 330–352 (YVCH…VRTH), 358–381 (YKCE…RMHH), 387–409 (YKCD…ARKH), 415–437 (YVCD…VRRH), 443–465 (YVCD…SRKH), and 471–494 (FICE…TKVH). The disordered stretch occupies residues 489–538 (HKTKVHSGADKTPDSSAEDHTLSEQDSIQKSPLSETMDVKPSDTTLPLAL). Residues 495-511 (SGADKTPDSSAEDHTLS) are compositionally biased toward basic and acidic residues. Residues 512–522 (EQDSIQKSPLS) are compositionally biased toward polar residues.

The protein belongs to the krueppel C2H2-type zinc-finger protein family.

Its subcellular location is the nucleus. This is Myoneurin (MYNN) from Pongo abelii (Sumatran orangutan).